Reading from the N-terminus, the 433-residue chain is PC-esterase domain-containing protein 1B (433 aa).

Residues 386–433 (PPCHQRQAPVVHRGFPRHFARGPYSNPWRDRPRRPPKHSPAGLESRPQ) form a disordered region.

This sequence belongs to the PC-esterase family.

In Mus musculus (Mouse), this protein is PC-esterase domain-containing protein 1B (Pced1b).